Here is a 129-residue protein sequence, read N- to C-terminus: D-ribose pyranase (129 aa).

The active-site Proton donor is the H20. Residues D28, H96, and 118-120 each bind substrate; that span reads YAN.

It belongs to the RbsD / FucU family. RbsD subfamily. As to quaternary structure, homodecamer.

Its subcellular location is the cytoplasm. It carries out the reaction beta-D-ribopyranose = beta-D-ribofuranose. It functions in the pathway carbohydrate metabolism; D-ribose degradation; D-ribose 5-phosphate from beta-D-ribopyranose: step 1/2. Catalyzes the interconversion of beta-pyran and beta-furan forms of D-ribose. The protein is D-ribose pyranase of Staphylococcus haemolyticus (strain JCSC1435).